Consider the following 24-residue polypeptide: Frenatin-4 (24 aa).

In terms of tissue distribution, expressed by the skin glands.

It is found in the secreted. Very weak antimicrobial peptide since it does not show activity below 100 ug/ml against Bacillus cereus, Escherichia coli, Leuconostoc mesenteroides, Micrococcus luteus, Pastewella haemolytica, Staphylococcus aureus, Streptococcus faecalis and Streptococcus uberis. The sequence is that of Frenatin-4 from Nyctimystes infrafrenatus (White-lipped tree frog).